Here is a 272-residue protein sequence, read N- to C-terminus: MADS-box transcription factor 58 (272 aa).

The disordered stretch occupies residues 1-41 (MHIYKEQEAEPSTGLMMPEPAPVASPGSGGSGGSGSVGAEK). A compositionally biased stretch (gly residues) spans 27-36 (GSGGSGGSGS). Residues 43–103 (GSRGKIEIKR…GRLYEYSNNS (61 aa)) form the MADS-box domain. A K-box domain is found at 129–219 (AQHYQQEAAK…KSKVAESERG (91 aa)).

As to expression, expressed in the lodicule, stamen carpel and ovule primordia.

It is found in the nucleus. Its function is as follows. Probable transcription factor involved in the development of floral organs. Acts as a C-class protein in association with MADS3. Involved in the control of lodicule number (whorl 2), stamen specification (whorl 3), floral meristem determinacy and regulation of the carpel morphogenesis (whorl 4). Plays a more predominant role in floral meristem determinacy than MADS3. The polypeptide is MADS-box transcription factor 58 (MADS58) (Oryza sativa subsp. japonica (Rice)).